A 955-amino-acid chain; its full sequence is UPF0182 protein syc2310_c (955 aa).

Helical transmembrane passes span 12-32, 45-65, 85-105, 141-161, 163-183, 224-244, 263-283, 306-326, and 343-363; these read IAAI…TLWF, LAVQ…LIGG, LQLG…LALT, GSWP…LFLW, PWPL…LLTS, FDLW…YYLA, HLVR…WLAQ, LPLL…LFWQ, and AAIA…QLVV.

The protein belongs to the UPF0182 family.

It localises to the cell membrane. This is UPF0182 protein syc2310_c from Synechococcus sp. (strain ATCC 27144 / PCC 6301 / SAUG 1402/1) (Anacystis nidulans).